Here is a 418-residue protein sequence, read N- to C-terminus: MIFDKGNVEDFDKELWDAIHAEEERQEHHIELIASENMVSKAVMAAQGSVLTNKYAEGYPGNRYYGGTECVDIVETLAIERAKKLFGAAFANVQAHSGSQANAAAYMALIEAGDTVLGMDLAAGGHLTHGSPVNFSGKTYHFVSYSVDADTEMLNYEAILEQAKAVQPKLIVAGASAYSRSIDFEKFRAIADHVGAYLMVDMAHIAGLVAAGVHPSPVPYAHIVTSTTHKTLRGPRGGLILTNDEALAKKINSAVFPGLQGGPLEHVIAAKAVAFKEALDPAFKDYAQAIIDNTAAMAAVFAQDDRFRLISGGTDNHVFLVDVTKVIANGKLAQNLLDEVNITLNKNAIPFETLSPFKTSGIRIGCAAITSRGMGVKESQTIARLIIKALVNHDQETILEEVRQEVRQLTDAFPLYKK.

(6S)-5,6,7,8-tetrahydrofolate-binding positions include Leu-121 and 125-127 (GHL). The residue at position 230 (Lys-230) is an N6-(pyridoxal phosphate)lysine. (6S)-5,6,7,8-tetrahydrofolate is bound at residue 355–357 (SPF).

This sequence belongs to the SHMT family. As to quaternary structure, homodimer. Pyridoxal 5'-phosphate is required as a cofactor.

It is found in the cytoplasm. The catalysed reaction is (6R)-5,10-methylene-5,6,7,8-tetrahydrofolate + glycine + H2O = (6S)-5,6,7,8-tetrahydrofolate + L-serine. Its pathway is one-carbon metabolism; tetrahydrofolate interconversion. It functions in the pathway amino-acid biosynthesis; glycine biosynthesis; glycine from L-serine: step 1/1. In terms of biological role, catalyzes the reversible interconversion of serine and glycine with tetrahydrofolate (THF) serving as the one-carbon carrier. This reaction serves as the major source of one-carbon groups required for the biosynthesis of purines, thymidylate, methionine, and other important biomolecules. Also exhibits THF-independent aldolase activity toward beta-hydroxyamino acids, producing glycine and aldehydes, via a retro-aldol mechanism. The sequence is that of Serine hydroxymethyltransferase from Streptococcus pyogenes serotype M49 (strain NZ131).